We begin with the raw amino-acid sequence, 307 residues long: Ribonuclease Z (307 aa).

Zn(2+) contacts are provided by His-63, His-65, Asp-67, His-68, His-141, Asp-212, and His-270. The active-site Proton acceptor is the Asp-67.

Belongs to the RNase Z family. As to quaternary structure, homodimer. Zn(2+) serves as cofactor.

It catalyses the reaction Endonucleolytic cleavage of RNA, removing extra 3' nucleotides from tRNA precursor, generating 3' termini of tRNAs. A 3'-hydroxy group is left at the tRNA terminus and a 5'-phosphoryl group is left at the trailer molecule.. Functionally, zinc phosphodiesterase, which displays some tRNA 3'-processing endonuclease activity. Probably involved in tRNA maturation, by removing a 3'-trailer from precursor tRNA. This chain is Ribonuclease Z, found in Bacillus mycoides (strain KBAB4) (Bacillus weihenstephanensis).